The primary structure comprises 502 residues: Uric acid degradation bifunctional protein (502 aa).

An OHCU decarboxylase region spans residues 1–178; that stretch reads MMRLKQLNEM…NSMTKHKERV (178 aa). Residue H68 is the Proton donor; for OHCU decarboxylase activity of the active site. Residues P69, 81 to 85, and 116 to 120 each bind 5-hydroxy-2-oxo-4-ureido-2,5-dihydro-1H-imidazole-5-carboxylate; these read SQEEQ and FVMAV. The urate oxidase stretch occupies residues 179-502; it reads MYYGKGDVFA…DEPDHKGALK (324 aa). K183 serves as the catalytic Charge relay system; for urate oxidase activity. K194 serves as the catalytic Charge relay system. The Charge relay system; for urate oxidase activity role is filled by T243. The urate site is built by T243, D244, F354, R371, I419, Q420, and N446.

This sequence in the N-terminal section; belongs to the OHCU decarboxylase family. The protein in the C-terminal section; belongs to the uricase family.

The catalysed reaction is 5-hydroxy-2-oxo-4-ureido-2,5-dihydro-1H-imidazole-5-carboxylate + H(+) = (S)-allantoin + CO2. The enzyme catalyses urate + O2 + H2O = 5-hydroxyisourate + H2O2. The protein operates within purine metabolism; urate degradation; (S)-allantoin from urate: step 1/3. Its pathway is purine metabolism; urate degradation; (S)-allantoin from urate: step 3/3. Its function is as follows. Catalyzes two steps in the degradation of uric acid, i.e. the oxidation of uric acid to 5-hydroxyisourate (HIU) and the stereoselective decarboxylation of 2-oxo-4-hydroxy-4-carboxy-5-ureidoimidazoline (OHCU) to (S)-allantoin. The chain is Uric acid degradation bifunctional protein (uao) from Bacillus sp. (strain TB-90).